Consider the following 188-residue polypeptide: Elongation factor P (188 aa).

The protein belongs to the elongation factor P family.

The protein localises to the cytoplasm. The protein operates within protein biosynthesis; polypeptide chain elongation. Involved in peptide bond synthesis. Stimulates efficient translation and peptide-bond synthesis on native or reconstituted 70S ribosomes in vitro. Probably functions indirectly by altering the affinity of the ribosome for aminoacyl-tRNA, thus increasing their reactivity as acceptors for peptidyl transferase. The protein is Elongation factor P of Christiangramia forsetii (strain DSM 17595 / CGMCC 1.15422 / KT0803) (Gramella forsetii).